Reading from the N-terminus, the 100-residue chain is Probable antitoxin MazE4 (100 aa).

Residues 77–100 are disordered; sequence PYESEAERSAARARRNARQQRSAQ.

In terms of assembly, forms a complex with cognate toxin MazF4.

Its function is as follows. Antitoxin component of a type II toxin-antitoxin (TA) system. Labile antitoxin that binds to cognate MazF4 toxin and counteracts its endoribonuclease activity. The polypeptide is Probable antitoxin MazE4 (mazE4) (Mycobacterium tuberculosis (strain CDC 1551 / Oshkosh)).